The chain runs to 443 residues: 26S proteasome regulatory subunit 4 homolog A (443 aa).

Disordered regions lie at residues 1–55 (MGQG…LPTV) and 87–108 (RLKP…LRGT). Basic and acidic residues-rich tracts occupy residues 12 to 28 (QGDR…KKFE) and 87 to 106 (RLKP…DDLR). 229–236 (GEPGTGKT) is a binding site for ATP. Glycyl lysine isopeptide (Lys-Gly) (interchain with G-Cter in ubiquitin) cross-links involve residues Lys296 and Lys433.

It belongs to the AAA ATPase family. As to quaternary structure, component of the 19S regulatory particle (RP/PA700) base subcomplex of the 26S proteasome. The 26S proteasome is composed of a core protease (CP), known as the 20S proteasome, capped at one or both ends by the 19S regulatory particle (RP/PA700). The RP/PA700 complex is composed of at least 17 different subunits in two subcomplexes, the base and the lid, which form the portions proximal and distal to the 20S proteolytic core, respectively. Required for innate immunity. Interacts with UNI. In terms of tissue distribution, preferentially expressed in the root and shoot apical meristem.

It localises to the cytoplasm. The protein localises to the P-body. Its subcellular location is the nucleus. In terms of biological role, the 26S protease is involved in the ATP-dependent degradation of ubiquitinated proteins. The regulatory (or ATPase) complex confers ATP dependency and substrate specificity to the 26S complex. Interacts with transit peptides of proteins targeted to the chloroplast, and may be involved in the degradation of unimported plastid protein precursors. Is required for the maintenance of postembryonic root and shoot meristems. Has a specific role in the regulation of organs size. Acts redundantly with RPT2B in the regulation of gametogenesis. With RPT2B plays a critical role in 26S proteasome assembly. Acts as an upstream signaling component for inducing both defense and morphological phenotypes in the constitutive active uni-1D mutant. Acts as a negative regulator of endoreduplication in trichome cells. May function after the completion of the third endoreduplication step (8C to 16C) mediated by RHL1. Acts as a negative regulator of transcriptional gene silencing (TGS) at specific endogenous genes through DNA methylation. Promotes post-transcriptional gene silencing (PTGS) by limiting the degradation of transgene aberrant RNAs by the RNA quality control (RQC) machinery, thus favoring their entry into cytoplasmic siRNA bodies where they can trigger PTGS. Involved in tolerance to zinc deficiency, possibly through alleviation of oxidative stresses or processing of poly-ubiquitinated proteins. Required for resistance to the fungal pathogen Golovinomyces cichoracearum. In Arabidopsis thaliana (Mouse-ear cress), this protein is 26S proteasome regulatory subunit 4 homolog A.